The chain runs to 338 residues: Lipoate-protein ligase A (338 aa).

A BPL/LPL catalytic domain is found at 29-216; it reads DPNQRVLFLW…AFFAHYGARV (188 aa). ATP-binding positions include R71, 76–79, and K134; that span reads GAVF. K134 serves as a coordination point for (R)-lipoate.

The protein belongs to the LplA family. In terms of assembly, monomer.

Its subcellular location is the cytoplasm. It catalyses the reaction L-lysyl-[lipoyl-carrier protein] + (R)-lipoate + ATP = N(6)-[(R)-lipoyl]-L-lysyl-[lipoyl-carrier protein] + AMP + diphosphate + H(+). It participates in protein modification; protein lipoylation via exogenous pathway; protein N(6)-(lipoyl)lysine from lipoate: step 1/2. It functions in the pathway protein modification; protein lipoylation via exogenous pathway; protein N(6)-(lipoyl)lysine from lipoate: step 2/2. Functionally, catalyzes both the ATP-dependent activation of exogenously supplied lipoate to lipoyl-AMP and the transfer of the activated lipoyl onto the lipoyl domains of lipoate-dependent enzymes. This Aeromonas salmonicida (strain A449) protein is Lipoate-protein ligase A.